The following is a 422-amino-acid chain: MEFPEHGGRLLGRLRQQRELGFLCDCTVLVGDARFPAHRAVLAACSVYFHLFYRDRPAGSRDTVRLNGDIVTAPAFGRLLDFMYEGRLDLRSLPVEDVLAAASYLHMYDIVKVCKGRLQEKDRSLDPGNPAPGAEPAQPPCPWPVWTADLCPAARKAKLPPFGVKAALPPRASGPPPCQVPEESDQALDLSLKSGPRQERVHPPCVLQTPLCSQRQPGAQPLVKDERDSLSEQEESSSSRSPHSPPKPPPVPAAKGLVVGLQPLPLSGEGSRELELGAGRLASEDELGPGGPLCICPLCSKLFPSSHVLQLHLSAHFRERDSTRARLSPDGVAPTCPLCGKTFSCTYTLKRHERTHSGEKPYTCVQCGKSFQYSHNLSRHTVVHTREKPHACRWCERRFTQSGDLYRHVRKFHCGLVKSLLV.

One can recognise a BTB domain in the interval 24–92 (CDCTVLVGDA…MYEGRLDLRS (69 aa)). Disordered regions lie at residues 121–141 (KDRS…QPPC), 166–188 (AALP…DQAL), and 207–256 (LQTP…AAKG). A compositionally biased stretch (pro residues) spans 243–252 (HSPPKPPPVP). 4 C2H2-type zinc fingers span residues 294–316 (CICP…LSAH), 334–356 (PTCP…ERTH), 362–384 (YTCV…TVVH), and 390–413 (HACR…RKFH).

The protein belongs to the krueppel C2H2-type zinc-finger protein family. ZBTB18 subfamily. As to expression, expressed in skeletal muscle (at protein level).

It is found in the cytoplasm. It localises to the nucleus. The protein resides in the nucleoplasm. Transcriptional repressor. Specifically binds DNA and probably acts by recruiting chromatin remodeling multiprotein complexes. The polypeptide is Zinc finger and BTB domain-containing protein 42 (ZBTB42) (Homo sapiens (Human)).